Reading from the N-terminus, the 290-residue chain is Picrinine-N-methytransferase (290 aa).

Positions 71–80 (MLDVGCGIGG) are SAM motif I. A Vacuolar targeting signal motif is present at residues 133–139 (DGTFDLV). The segment at 134–142 (GTFDLVFTI) is SAM motif II. The SAM motif III stretch occupies residues 161 to 170 (VAAPGAPIVI).

The protein belongs to the class I-like SAM-binding methyltransferase superfamily. gTMT family. As to quaternary structure, homodimer. Accumulates in tissues actively synthesizing monoterpenoid indole alkaloids (MIAs) (at protein level). Mainly expressed in young leaves and, to a lower extent, in roots and stems.

The protein localises to the vacuole membrane. The enzyme catalyses picrinine + S-adenosyl-L-methionine = ervincine + S-adenosyl-L-homocysteine + H(+). Its pathway is alkaloid biosynthesis; vindoline biosynthesis. S-adenosyl-L-methionine-dependent N-methyltransferase involved in the biosynthesis of biologically active monoterpenoid indole alkaloids (MIAs) natural products including vindoline. Catalyzes the conversion of picrinine to N-methylpicrinine (ervincine). Also accepts, with low efficiency, 21-hydroxycyclolochnericine and norajmaline as substrates. This chain is Picrinine-N-methytransferase, found in Rauvolfia serpentina (Serpentine wood).